The primary structure comprises 410 residues: Translation initiation factor 2 subunit gamma (410 aa).

Residues 9 to 202 form the tr-type G domain; sequence QAEVNIGMVG…AIEEFIPTPK (194 aa). A G1 region spans residues 18-25; that stretch reads GHVDHGKT. Aspartate 21, threonine 25, glycine 46, and threonine 48 together coordinate Mg(2+). 21–26 lines the GTP pocket; the sequence is DHGKTT. Residues 46-50 are G2; that stretch reads GITIK. Zn(2+) is bound by residues cysteine 61, cysteine 64, cysteine 73, and cysteine 76. The G3 stretch occupies residues 90–93; sequence DAPG. GTP contacts are provided by residues 145-148 and 180-182; these read NKIE and SAL. Residues 145–148 are G4; sequence NKIE. A G5 region spans residues 180 to 182; it reads SAL.

This sequence belongs to the TRAFAC class translation factor GTPase superfamily. Classic translation factor GTPase family. EIF2G subfamily. Heterotrimer composed of an alpha, a beta and a gamma chain. Mg(2+) serves as cofactor.

It catalyses the reaction GTP + H2O = GDP + phosphate + H(+). Functionally, eIF-2 functions in the early steps of protein synthesis by forming a ternary complex with GTP and initiator tRNA. The chain is Translation initiation factor 2 subunit gamma from Thermococcus kodakarensis (strain ATCC BAA-918 / JCM 12380 / KOD1) (Pyrococcus kodakaraensis (strain KOD1)).